Here is a 408-residue protein sequence, read N- to C-terminus: D-inositol 3-phosphate glycosyltransferase (408 aa).

H7 contacts 1D-myo-inositol 3-phosphate. UDP-N-acetyl-alpha-D-glucosamine contacts are provided by residues 13-14 (QP) and G21. 1D-myo-inositol 3-phosphate contacts are provided by residues 18–23 (DAGGMN), K76, Y109, T133, and R153. UDP-N-acetyl-alpha-D-glucosamine contacts are provided by R227, K232, and V288. Mg(2+) contacts are provided by F297, R298, and A300. Residues E310 and E318 each coordinate UDP-N-acetyl-alpha-D-glucosamine. Residue T324 coordinates Mg(2+).

Belongs to the glycosyltransferase group 1 family. MshA subfamily. In terms of assembly, homodimer.

The catalysed reaction is 1D-myo-inositol 3-phosphate + UDP-N-acetyl-alpha-D-glucosamine = 1D-myo-inositol 2-acetamido-2-deoxy-alpha-D-glucopyranoside 3-phosphate + UDP + H(+). In terms of biological role, catalyzes the transfer of a N-acetyl-glucosamine moiety to 1D-myo-inositol 3-phosphate to produce 1D-myo-inositol 2-acetamido-2-deoxy-glucopyranoside 3-phosphate in the mycothiol biosynthesis pathway. The protein is D-inositol 3-phosphate glycosyltransferase of Paenarthrobacter aurescens (strain TC1).